The following is a 149-amino-acid chain: UPF0756 membrane protein MS1439 (149 aa).

A run of 4 helical transmembrane segments spans residues 10–32, 56–76, 82–102, and 126–146; these read IMLVVLILLGVLSNNNSITISAL, VGIIILTVGVLAPLVSGKVQL, FLNWQMFLSIVIGIAVAWFAG, and VAFLGGIPVGPLIAAGILAVI.

The protein belongs to the UPF0756 family.

It localises to the cell membrane. This Mannheimia succiniciproducens (strain KCTC 0769BP / MBEL55E) protein is UPF0756 membrane protein MS1439.